A 65-amino-acid polypeptide reads, in one-letter code: Large ribosomal subunit protein uL29 (65 aa).

Belongs to the universal ribosomal protein uL29 family.

The polypeptide is Large ribosomal subunit protein uL29 (rpmC) (Xylella fastidiosa (strain 9a5c)).